The following is a 407-amino-acid chain: Mitochondrial protein import protein mas5 (407 aa).

The J domain maps to 6–68 (KLYEVLNVDV…EKRATYDRFG (63 aa)). Substrate is bound by residues L110 and 129 to 131 (LAL). The CR-type zinc-finger motif lies at 124-207 (GKTTKLALQK…CDGAKVISQR (84 aa)). Zn(2+) is bound by residues C137, C140, C153, C156, C179, C182, C195, and C198. 4 CXXCXGXG motif repeats span residues 137 to 144 (CPKCSGRG), 153 to 160 (CASCNGSG), 179 to 186 (CPDCNGAG), and 195 to 202 (CKECDGAK). Substrate contacts are provided by residues 209–210 (IL) and 241–243 (VIF). The interval 375-407 (VRIDNNVDPTTATSMDEDEDEEGGHPGVQCAQQ) is disordered. C404 carries the post-translational modification Cysteine methyl ester. C404 carries S-farnesyl cysteine lipidation. Residues 405-407 (AQQ) constitute a propeptide, removed in mature form.

In terms of assembly, homodimer.

The protein resides in the cytoplasm. Its subcellular location is the nucleus. Functionally, probably involved in mitochondrial protein import. Plays a role in microtubule cytoskeleton organization. The sequence is that of Mitochondrial protein import protein mas5 (mas5) from Schizosaccharomyces pombe (strain 972 / ATCC 24843) (Fission yeast).